The primary structure comprises 378 residues: Spermidine/putrescine import ATP-binding protein PotA (378 aa).

In terms of domain architecture, ABC transporter spans 18 to 248 (VQLAGIRKCF…PKNLFVTGFI (231 aa)). 50-57 (GPSGCGKT) lines the ATP pocket.

Belongs to the ABC transporter superfamily. Spermidine/putrescine importer (TC 3.A.1.11.1) family. The complex is composed of two ATP-binding proteins (PotA), two transmembrane proteins (PotB and PotC) and a solute-binding protein (PotD).

The protein localises to the cell inner membrane. The enzyme catalyses ATP + H2O + polyamine-[polyamine-binding protein]Side 1 = ADP + phosphate + polyamineSide 2 + [polyamine-binding protein]Side 1.. Functionally, part of the ABC transporter complex PotABCD involved in spermidine/putrescine import. Responsible for energy coupling to the transport system. This chain is Spermidine/putrescine import ATP-binding protein PotA, found in Shigella flexneri serotype 5b (strain 8401).